A 338-amino-acid chain; its full sequence is UDP-3-O-acylglucosamine N-acyltransferase (338 aa).

The active-site Proton acceptor is His-243.

This sequence belongs to the transferase hexapeptide repeat family. LpxD subfamily. As to quaternary structure, homotrimer.

It catalyses the reaction a UDP-3-O-[(3R)-3-hydroxyacyl]-alpha-D-glucosamine + a (3R)-hydroxyacyl-[ACP] = a UDP-2-N,3-O-bis[(3R)-3-hydroxyacyl]-alpha-D-glucosamine + holo-[ACP] + H(+). It functions in the pathway bacterial outer membrane biogenesis; LPS lipid A biosynthesis. Its function is as follows. Catalyzes the N-acylation of UDP-3-O-acylglucosamine using 3-hydroxyacyl-ACP as the acyl donor. Is involved in the biosynthesis of lipid A, a phosphorylated glycolipid that anchors the lipopolysaccharide to the outer membrane of the cell. This is UDP-3-O-acylglucosamine N-acyltransferase from Amoebophilus asiaticus (strain 5a2).